We begin with the raw amino-acid sequence, 232 residues long: Ribosomal RNA small subunit methyltransferase G (232 aa).

Residues Gly93, Leu98, 144–145, and Arg163 contribute to the S-adenosyl-L-methionine site; that span reads VE.

The protein belongs to the methyltransferase superfamily. RNA methyltransferase RsmG family.

The protein localises to the cytoplasm. It carries out the reaction guanosine(527) in 16S rRNA + S-adenosyl-L-methionine = N(7)-methylguanosine(527) in 16S rRNA + S-adenosyl-L-homocysteine. In terms of biological role, specifically methylates the N7 position of guanine in position 527 of 16S rRNA. In Burkholderia pseudomallei (strain 1106a), this protein is Ribosomal RNA small subunit methyltransferase G.